A 352-amino-acid polypeptide reads, in one-letter code: C5a anaphylatoxin chemotactic receptor 1 (352 aa).

The span at 1-11 shows a compositional bias: polar residues; it reads MDPISNDSSEI. A disordered region spans residues 1-20; that stretch reads MDPISNDSSEITYDYSDGTP. At 1–38 the chain is on the extracellular side; it reads MDPISNDSSEITYDYSDGTPNPDMPADGVYIPKMEPGD. N-linked (GlcNAc...) asparagine glycosylation is present at N6. 2 positions are modified to sulfotyrosine: Y13 and Y15. A helical membrane pass occupies residues 39–65; the sequence is IAALIIYLAVFLVGVTGNALVVWVTAF. Topologically, residues 66-70 are cytoplasmic; the sequence is EAKRT. A helical transmembrane segment spans residues 71 to 94; the sequence is VNAIWFLNLAVADLLSCLALPILF. Residues 95 to 111 lie on the Extracellular side of the membrane; it reads TSIVKHNHWPFGDQACI. C110 and C189 form a disulfide bridge. Residues 112–133 form a helical membrane-spanning segment; sequence VLPSLILLNMYSSILLLATISA. Residues 134–154 are Cytoplasmic-facing; that stretch reads DRFLLVFKPIWCQKFRRPGLA. The chain crosses the membrane as a helical span at residues 155 to 175; sequence WMACGVTWVLALLLTIPSFVF. The Extracellular portion of the chain corresponds to 176–202; it reads RRIHKDPYSDSILCNIDYSKGPFFIEK. The helical transmembrane segment at 203-228 threads the bilayer; the sequence is AIAILRLMVGFVLPLLTLNICYTFLL. Residues 229–244 lie on the Cytoplasmic side of the membrane; that stretch reads IRTWSRKATRSTKTLK. A helical transmembrane segment spans residues 245–267; that stretch reads VVMAVVTCFFVFWLPYQVTGVIL. The Extracellular segment spans residues 268-284; the sequence is AWLPRSSSTFQSVERLN. Residues 285–305 traverse the membrane as a helical segment; it reads SLCVSLAYINCCVNPIIYVMA. At 306 to 352 the chain is on the cytoplasmic side; it reads GQGFHGRLRRSLPSIIRNVLSEDSLGRDSKSFTRSTMDTSTQKSQAV. A phosphoserine mark is found at S316, S319, S326, S329, S334, S336, and S340. Positions 332–352 are disordered; it reads RDSKSFTRSTMDTSTQKSQAV. Residues 337-352 show a composition bias toward polar residues; the sequence is FTRSTMDTSTQKSQAV.

Belongs to the G-protein coupled receptor 1 family. Homodimer. May also form higher-order oligomers. Interacts (when phosphorylated) with ARRB1 and ARRB2; the interaction is associated with internalization of C5aR. Post-translationally, sulfation plays a critical role in the association of C5aR with C5a, but no significant role in the ability of the receptor to transduce a signal and mobilize calcium in response to a small peptide agonist. Phosphorylated on serine residues in response to C5a binding, resulting in internalization of the receptor and short-term desensitization to the ligand.

The protein resides in the cell membrane. The protein localises to the cytoplasmic vesicle. Functionally, receptor for the chemotactic and inflammatory peptide anaphylatoxin C5a. The ligand interacts with at least two sites on the receptor: a high-affinity site on the extracellular N-terminus, and a second site in the transmembrane region which activates downstream signaling events. Receptor activation stimulates chemotaxis, granule enzyme release, intracellular calcium release and superoxide anion production. The protein is C5a anaphylatoxin chemotactic receptor 1 (C5ar1) of Rattus norvegicus (Rat).